We begin with the raw amino-acid sequence, 63 residues long: Keratin-associated protein 19-8 (63 aa).

This sequence belongs to the KRTAP type 19 family. As to quaternary structure, interacts with hair keratins.

Functionally, in the hair cortex, hair keratin intermediate filaments are embedded in an interfilamentous matrix, consisting of hair keratin-associated proteins (KRTAP), which are essential for the formation of a rigid and resistant hair shaft through their extensive disulfide bond cross-linking with abundant cysteine residues of hair keratins. The matrix proteins include the high-sulfur and high-glycine-tyrosine keratins. This is Keratin-associated protein 19-8 (KRTAP19-8) from Homo sapiens (Human).